A 187-amino-acid polypeptide reads, in one-letter code: Flavin prenyltransferase LpdB (187 aa).

FMN contacts are provided by residues 10-12, Ser-37, 88-91, and Arg-123; these read GAS and SMKT. Dimethylallyl phosphate is bound by residues Tyr-153 and Lys-169.

It belongs to the UbiX/PAD1 family.

It carries out the reaction dimethylallyl phosphate + FMNH2 = prenylated FMNH2 + phosphate. Functionally, involved in tannin degradation. Flavin prenyltransferase that catalyzes the synthesis of the prenylated FMN cofactor (prenyl-FMN) for gallate decarboxylase LpdC. The prenyltransferase is metal-independent and links a dimethylallyl moiety from dimethylallyl monophosphate (DMAP) to the flavin N5 and C6 atoms of FMN. This chain is Flavin prenyltransferase LpdB, found in Lactiplantibacillus plantarum (strain ATCC BAA-793 / NCIMB 8826 / WCFS1) (Lactobacillus plantarum).